A 115-amino-acid polypeptide reads, in one-letter code: UPF0738 protein SE_0694 (115 aa).

The protein belongs to the UPF0738 family.

In Staphylococcus epidermidis (strain ATCC 12228 / FDA PCI 1200), this protein is UPF0738 protein SE_0694.